The sequence spans 260 residues: NAD-capped RNA hydrolase NudC (260 aa).

Arg69 is a substrate binding site. Cys98 and Cys101 together coordinate Zn(2+). Glu111 is a substrate binding site. The Zn(2+) site is built by Cys116 and Cys119. Tyr124 lines the substrate pocket. Positions 125–248 (PQIAPCIIVA…TVARRLIEDT (124 aa)) constitute a Nudix hydrolase domain. A divalent metal cation contacts are provided by Ala158, Glu174, and Glu178. Residues 159–180 (GFVEVGETLEQTVVREVMEESQ) carry the Nudix box motif. 192-199 (QPWPFPHS) is a binding site for substrate. Glu219 is a binding site for a divalent metal cation. Ala241 lines the substrate pocket.

The protein belongs to the Nudix hydrolase family. NudC subfamily. Homodimer. Mg(2+) is required as a cofactor. The cofactor is Mn(2+). Zn(2+) serves as cofactor.

It carries out the reaction a 5'-end NAD(+)-phospho-ribonucleoside in mRNA + H2O = a 5'-end phospho-adenosine-phospho-ribonucleoside in mRNA + beta-nicotinamide D-ribonucleotide + 2 H(+). It catalyses the reaction NAD(+) + H2O = beta-nicotinamide D-ribonucleotide + AMP + 2 H(+). The catalysed reaction is NADH + H2O = reduced beta-nicotinamide D-ribonucleotide + AMP + 2 H(+). Its function is as follows. mRNA decapping enzyme that specifically removes the nicotinamide adenine dinucleotide (NAD) cap from a subset of mRNAs by hydrolyzing the diphosphate linkage to produce nicotinamide mononucleotide (NMN) and 5' monophosphate mRNA. The NAD-cap is present at the 5'-end of some mRNAs and stabilizes RNA against 5'-processing. Has preference for mRNAs with a 5'-end purine. Catalyzes the hydrolysis of a broad range of dinucleotide pyrophosphates. This is NAD-capped RNA hydrolase NudC from Pectobacterium carotovorum subsp. carotovorum (strain PC1).